Reading from the N-terminus, the 175-residue chain is Austinoid biosynthesis cluster protein F (175 aa).

This sequence belongs to the trt14 isomerase family. In terms of assembly, homodimer.

It functions in the pathway secondary metabolite biosynthesis; terpenoid biosynthesis. Functionally, part of the gene cluster that mediates the biosynthesis of calidodehydroaustin, a fungal meroterpenoid. The first step of the pathway is the synthesis of 3,5-dimethylorsellinic acid by the polyketide synthase ausA. 3,5-dimethylorsellinic acid is then prenylated by the polyprenyl transferase ausN. Further epoxidation by the FAD-dependent monooxygenase ausM and cyclization by the probable terpene cyclase ausL lead to the formation of protoaustinoid A. Protoaustinoid A is then oxidized to spiro-lactone preaustinoid A3 by the combined action of the FAD-binding monooxygenases ausB and ausC, and the dioxygenase ausE. Acid-catalyzed keto-rearrangement and ring contraction of the tetraketide portion of preaustinoid A3 by ausJ lead to the formation of preaustinoid A4. The aldo-keto reductase ausK, with the help of ausH, is involved in the next step by transforming preaustinoid A4 into isoaustinone which is in turn hydroxylated by the P450 monooxygenase ausI to form austinolide. The cytochrome P450 monooxygenase ausG modifies austinolide to austinol. Austinol is further acetylated to austin by the O-acetyltransferase ausP, which spontaneously changes to dehydroaustin. The cytochrome P450 monooxygenase ausR then converts dehydroaustin is into 7-dehydrodehydroaustin. The hydroxylation catalyzed by ausR permits the O-acetyltransferase ausQ to add an additional acetyl group to the molecule, leading to the formation of acetoxydehydroaustin. The short chain dehydrogenase ausT catalyzes the reduction of the double bond present between carbon atoms 1 and 2 to convert 7-dehydrodehydroaustin into 1,2-dihydro-7-hydroxydehydroaustin. AusQ catalyzes not only an acetylation reaction but also the addition of the PKS ausV diketide product to 1,2-dihydro-7-hydroxydehydroaustin, forming precalidodehydroaustin. Finally, the iron/alpha-ketoglutarate-dependent dioxygenase converts precalidodehydroaustin into calidodehydroaustin. The polypeptide is Austinoid biosynthesis cluster protein F (Aspergillus calidoustus).